Reading from the N-terminus, the 429-residue chain is Histidine--tRNA ligase (429 aa).

This sequence belongs to the class-II aminoacyl-tRNA synthetase family. In terms of assembly, homodimer.

The protein localises to the cytoplasm. The catalysed reaction is tRNA(His) + L-histidine + ATP = L-histidyl-tRNA(His) + AMP + diphosphate + H(+). In Corynebacterium efficiens (strain DSM 44549 / YS-314 / AJ 12310 / JCM 11189 / NBRC 100395), this protein is Histidine--tRNA ligase.